Consider the following 790-residue polypeptide: Lon protease 2 (790 aa).

Positions Leu18–Leu210 constitute a Lon N-terminal domain. Gly362 to Thr369 provides a ligand contact to ATP. The 182-residue stretch at Ser598 to Pro779 folds into the Lon proteolytic domain. Active-site residues include Ser685 and Lys728.

It belongs to the peptidase S16 family. Homohexamer. Organized in a ring with a central cavity.

It is found in the cytoplasm. The enzyme catalyses Hydrolysis of proteins in presence of ATP.. In terms of biological role, ATP-dependent serine protease that mediates the selective degradation of mutant and abnormal proteins as well as certain short-lived regulatory proteins. Required for cellular homeostasis and for survival from DNA damage and developmental changes induced by stress. Degrades polypeptides processively to yield small peptide fragments that are 5 to 10 amino acids long. Binds to DNA in a double-stranded, site-specific manner. The protein is Lon protease 2 of Syntrophobacter fumaroxidans (strain DSM 10017 / MPOB).